The sequence spans 715 residues: 1,4-alpha-glucan branching enzyme GlgB (715 aa).

Asp-396 functions as the Nucleophile in the catalytic mechanism. The Proton donor role is filled by Glu-449.

This sequence belongs to the glycosyl hydrolase 13 family. GlgB subfamily. Monomer.

It catalyses the reaction Transfers a segment of a (1-&gt;4)-alpha-D-glucan chain to a primary hydroxy group in a similar glucan chain.. It participates in glycan biosynthesis; glycogen biosynthesis. In terms of biological role, catalyzes the formation of the alpha-1,6-glucosidic linkages in glycogen by scission of a 1,4-alpha-linked oligosaccharide from growing alpha-1,4-glucan chains and the subsequent attachment of the oligosaccharide to the alpha-1,6 position. The protein is 1,4-alpha-glucan branching enzyme GlgB of Vibrio vulnificus (strain YJ016).